Here is a 423-residue protein sequence, read N- to C-terminus: Protein SOSEKI 5 (423 aa).

Positions 1 to 33 (MSSRVFRATPDNNYLVPRRSKDQQDTSPDRNRI) are disordered. Residues 19-33 (RSKDQQDTSPDRNRI) are compositionally biased toward basic and acidic residues. Positions 45 to 136 (RKVPVVYYLC…YVLKGSEVLD (92 aa)) are DIX-like oligomerization domain. Disordered regions lie at residues 150–172 (SSFRDPRSLNPDKNSGDDIPAVI) and 196–258 (SSAE…SPET). Positions 196 to 211 (SSAESTQRLAADASTQ) are enriched in polar residues. 2 short sequence motifs (association to cell membranes) span residues 233–234 (AS) and 303–304 (CG). Residues 379 to 423 (SSSYNADRCSRMGPTTEKDEEEAVRAKCIPRKPKPVAKRNNGGQQ) are disordered. The span at 406–415 (CIPRKPKPVA) shows a compositional bias: basic residues.

It belongs to the SOSEKI family. As to quaternary structure, homodimer. Forms long polymer filaments with other SOKs proteins polymers (e.g. SOK1, SOK2, SOK3 and SOK4) crucial for polar localization and biological activity. Binds to ANGUSTIFOLIA (AN). In terms of tissue distribution, expressed during embryogenesis and in roots.

Its subcellular location is the cell membrane. SOSEKI proteins (SOK1-5) locally interpret global polarity cues and can influence cell division orientation to coordinate cell polarization relative to body axes. This chain is Protein SOSEKI 5, found in Arabidopsis thaliana (Mouse-ear cress).